The primary structure comprises 226 residues: ATP synthase subunit a (226 aa).

5 helical membrane passes run 17–37 (FLFV…AKLA), 78–98 (LVAT…IPGF), 104–124 (NINF…FEGI), 175–195 (LFVW…GFAL), and 201–221 (FLQT…AVLL).

This sequence belongs to the ATPase A chain family. F-type ATPases have 2 components, CF(1) - the catalytic core - and CF(0) - the membrane proton channel. CF(1) has five subunits: alpha(3), beta(3), gamma(1), delta(1), epsilon(1). CF(0) has three main subunits: a(1), b(2) and c(9-12). The alpha and beta chains form an alternating ring which encloses part of the gamma chain. CF(1) is attached to CF(0) by a central stalk formed by the gamma and epsilon chains, while a peripheral stalk is formed by the delta and b chains.

The protein resides in the cell inner membrane. In terms of biological role, key component of the proton channel; it plays a direct role in the translocation of protons across the membrane. This Nitratiruptor sp. (strain SB155-2) protein is ATP synthase subunit a.